Consider the following 326-residue polypeptide: Ribose-phosphate pyrophosphokinase (326 aa).

Residues 45 to 47 and 104 to 105 contribute to the ATP site; these read NGE and RQ. Residues histidine 138 and aspartate 178 each contribute to the Mg(2+) site. Lysine 202 is an active-site residue. D-ribose 5-phosphate-binding positions include arginine 204, aspartate 230, and 234 to 238; that span reads DTGGT.

Belongs to the ribose-phosphate pyrophosphokinase family. Class I subfamily. In terms of assembly, homohexamer. It depends on Mg(2+) as a cofactor.

The protein localises to the cytoplasm. It carries out the reaction D-ribose 5-phosphate + ATP = 5-phospho-alpha-D-ribose 1-diphosphate + AMP + H(+). It functions in the pathway metabolic intermediate biosynthesis; 5-phospho-alpha-D-ribose 1-diphosphate biosynthesis; 5-phospho-alpha-D-ribose 1-diphosphate from D-ribose 5-phosphate (route I): step 1/1. In terms of biological role, involved in the biosynthesis of the central metabolite phospho-alpha-D-ribosyl-1-pyrophosphate (PRPP) via the transfer of pyrophosphoryl group from ATP to 1-hydroxyl of ribose-5-phosphate (Rib-5-P). The protein is Ribose-phosphate pyrophosphokinase of Mycobacterium bovis (strain ATCC BAA-935 / AF2122/97).